The following is a 483-amino-acid chain: MFS-type transporter ppzB (483 aa).

The next 5 membrane-spanning stretches (helical) occupy residues 18–38 (FILT…GILL), 62–82 (AFLA…GWAA), 96–116 (MFLV…LLVV), 149–169 (IGTI…LGGV), and 178–198 (AVFA…ALVI). Asn219 is a glycosylation site (N-linked (GlcNAc...) asparagine). The next 6 membrane-spanning stretches (helical) occupy residues 281-301 (LAML…ATVP), 310-330 (FSSL…FALG), 344-364 (AAAT…GLPE), 374-394 (VALF…VTSP), 424-444 (FGFS…LGGF), and 453-473 (VMGA…FLFV).

The protein belongs to the major facilitator superfamily. TCR/Tet family.

It is found in the membrane. Functionally, MFS-type transporter; part of the gene cluster that mediates the biosynthesis of pyrrolopyrazines, secondary metabolites showing insecticidal activity. Probably involved in the secretion of peramine and other pyrrolopyrazines. In Metarhizium rileyi (strain RCEF 4871) (Nomuraea rileyi), this protein is MFS-type transporter ppzB.